Consider the following 89-residue polypeptide: Small ribosomal subunit protein uS15 (89 aa).

Belongs to the universal ribosomal protein uS15 family. In terms of assembly, part of the 30S ribosomal subunit. Forms a bridge to the 50S subunit in the 70S ribosome, contacting the 23S rRNA.

Functionally, one of the primary rRNA binding proteins, it binds directly to 16S rRNA where it helps nucleate assembly of the platform of the 30S subunit by binding and bridging several RNA helices of the 16S rRNA. Its function is as follows. Forms an intersubunit bridge (bridge B4) with the 23S rRNA of the 50S subunit in the ribosome. The chain is Small ribosomal subunit protein uS15 from Streptococcus agalactiae serotype Ia (strain ATCC 27591 / A909 / CDC SS700).